The primary structure comprises 418 residues: Diaminopimelate decarboxylase (418 aa).

K53 is modified (N6-(pyridoxal phosphate)lysine). Pyridoxal 5'-phosphate-binding positions include G223 and 264-267; that span reads EPGR. Substrate contacts are provided by R267, R303, and Y307. The active-site Proton donor is C338. Substrate contacts are provided by E339 and Y374. Y374 contacts pyridoxal 5'-phosphate.

Belongs to the Orn/Lys/Arg decarboxylase class-II family. LysA subfamily. In terms of assembly, homodimer. It depends on pyridoxal 5'-phosphate as a cofactor.

It catalyses the reaction meso-2,6-diaminopimelate + H(+) = L-lysine + CO2. The protein operates within amino-acid biosynthesis; L-lysine biosynthesis via DAP pathway; L-lysine from DL-2,6-diaminopimelate: step 1/1. In terms of biological role, specifically catalyzes the decarboxylation of meso-diaminopimelate (meso-DAP) to L-lysine. This Buchnera aphidicola subsp. Baizongia pistaciae (strain Bp) protein is Diaminopimelate decarboxylase.